The following is a 734-amino-acid chain: Translation initiation factor IF-2 (734 aa).

A disordered region spans residues 39–110 (SKFAPRSSFT…TGKPETKKRE (72 aa)). Positions 82-110 (DYEKRKLAEQRATRRLKGDTGKPETKKRE) are enriched in basic and acidic residues. In terms of domain architecture, tr-type G spans 238–405 (NRPPIVTVMG…SIVLQAEILD (168 aa)). A G1 region spans residues 247–254 (GHVDHGKT). 247 to 254 (GHVDHGKT) lines the GTP pocket. A G2 region spans residues 272 to 276 (GITQH). The G3 stretch occupies residues 293 to 296 (DTPG). GTP is bound by residues 293–297 (DTPGH) and 347–350 (NKCD). The G4 stretch occupies residues 347–350 (NKCD). Residues 383 to 385 (SAK) form a G5 region.

Belongs to the TRAFAC class translation factor GTPase superfamily. Classic translation factor GTPase family. IF-2 subfamily.

The protein localises to the cytoplasm. In terms of biological role, one of the essential components for the initiation of protein synthesis. Protects formylmethionyl-tRNA from spontaneous hydrolysis and promotes its binding to the 30S ribosomal subunits. Also involved in the hydrolysis of GTP during the formation of the 70S ribosomal complex. The protein is Translation initiation factor IF-2 of Pelagibacter ubique (strain HTCC1062).